Consider the following 435-residue polypeptide: Ribosomal protein uS12 methylthiotransferase RimO (435 aa).

Residues 2–118 form the MTTase N-terminal domain; the sequence is KKFHIVKLGC…IVEKIENGEY (117 aa). The [4Fe-4S] cluster site is built by cysteine 11, cysteine 47, cysteine 81, cysteine 150, cysteine 154, and cysteine 157. The Radical SAM core domain maps to 136–364; it reads IPDSHYAYVK…MTVQSEISKN (229 aa). A TRAM domain is found at 367–435; sequence EKYIGETLEV…EYDLEGEIVE (69 aa).

The protein belongs to the methylthiotransferase family. RimO subfamily. The cofactor is [4Fe-4S] cluster.

The protein resides in the cytoplasm. The enzyme catalyses L-aspartate(89)-[ribosomal protein uS12]-hydrogen + (sulfur carrier)-SH + AH2 + 2 S-adenosyl-L-methionine = 3-methylsulfanyl-L-aspartate(89)-[ribosomal protein uS12]-hydrogen + (sulfur carrier)-H + 5'-deoxyadenosine + L-methionine + A + S-adenosyl-L-homocysteine + 2 H(+). Catalyzes the methylthiolation of an aspartic acid residue of ribosomal protein uS12. The protein is Ribosomal protein uS12 methylthiotransferase RimO of Petrotoga mobilis (strain DSM 10674 / SJ95).